Reading from the N-terminus, the 570-residue chain is Zinc finger protein 76 (570 aa).

A Glycyl lysine isopeptide (Lys-Gly) (interchain with G-Cter in SUMO2) cross-link involves residue lysine 24. A run of 3 repeats spans residues 34-45, 62-73, and 88-99. The 3 X 12 AA approximate repeats stretch occupies residues 34 to 99; sequence IQLEDGTTAY…LEDGSTAYIH (66 aa). 7 C2H2-type zinc fingers span residues 165–189, 195–219, 225–249, 255–279, 285–309, 315–339, and 345–368; these read FRCG…ERAH, YRCD…VRTH, YKCP…VRTH, FQCP…VRTH, YTCP…VRIH, YVCT…HVVH, and YTCS…RSAH. Residues 365 to 401 are disordered; that stretch reads RSAHGELEATEESEQALYEQQQLEAASAAEESPPPKR. Residues 379–395 show a composition bias toward low complexity; sequence QALYEQQQLEAASAAEE.

The protein belongs to the krueppel C2H2-type zinc-finger protein family. As to expression, testis.

It localises to the nucleus. In terms of biological role, may be involved in transcriptional regulation. This chain is Zinc finger protein 76 (ZNF76), found in Homo sapiens (Human).